The following is a 270-amino-acid chain: NAD kinase (270 aa).

Residue Asp49 is the Proton acceptor of the active site. NAD(+)-binding positions include 49-50, Arg54, 126-127, Arg152, Asp154, 165-170, Ala189, and Gln227; these read DG, NE, and TAYNKS.

Belongs to the NAD kinase family. A divalent metal cation is required as a cofactor.

Its subcellular location is the cytoplasm. It carries out the reaction NAD(+) + ATP = ADP + NADP(+) + H(+). In terms of biological role, involved in the regulation of the intracellular balance of NAD and NADP, and is a key enzyme in the biosynthesis of NADP. Catalyzes specifically the phosphorylation on 2'-hydroxyl of the adenosine moiety of NAD to yield NADP. The polypeptide is NAD kinase (Lactococcus lactis subsp. cremoris (strain SK11)).